The following is a 277-amino-acid chain: Uracil phosphoribosyltransferase homolog (277 aa).

A disordered region spans residues 1 to 69; it reads MEAMPCHNQR…AAAPSPAAED (69 aa). A compositionally biased stretch (low complexity) spans 37–69; it reads AEPSEGSSSGSPSPDSSSGSNGAAAAPSPAAED. GTP-binding positions include arginine 101, arginine 110, and 144–147; that span reads EKGN. Arginine 154 provides a ligand contact to 5-phospho-alpha-D-ribose 1-diphosphate. The GTP site is built by arginine 171 and arginine 200. Residue 206 to 214 coordinates 5-phospho-alpha-D-ribose 1-diphosphate; it reads YPILSTGNT. Uracil is bound at residue 267–269; sequence THF.

Belongs to the UPRTase family.

It localises to the cytoplasm. Its subcellular location is the nucleus. This Gallus gallus (Chicken) protein is Uracil phosphoribosyltransferase homolog (UPRT).